The chain runs to 416 residues: MSLVAIGINHKTATVDLREKVAFAPDRIHDAMKSLASCTQSGEAVIISTCNRTELYCNNSEAADVVAWLEDYHQLSHEDVEPCLYQYKGQEAVKHLMRVSAGLDSLILGEPQILGQVKQSFVKAKEAGTVAATMDRMFQNTFSVAKKIRTETEIGAAAVSVAFAAVSMAKHIFSSLSTTQVLLVGAGETIELVARHLKDNGVKAMVVANRTISRAEAMCDEFGATAITLEQIPDFLPKADIVISSTASPLPILGKGMVEKALKQRRHQPMLLVDIAVPRDIEAEVADLDDAFLYTVDDLQSIIEQNMASRREAAEQAELIAEDQAYQFMEWIRSLESVDSIREYRTQSMAIKDELVERAVNKLAQGGNSEQVLLELANKLTNKLIHAPTQALTAASRQGDLNSLGQLRAVLGLDKD.

Substrate-binding positions include 49 to 52, S105, 110 to 112, and Q116; these read TCNR and EPQ. C50 functions as the Nucleophile in the catalytic mechanism. 185–190 contributes to the NADP(+) binding site; sequence GAGETI.

The protein belongs to the glutamyl-tRNA reductase family. As to quaternary structure, homodimer.

The catalysed reaction is (S)-4-amino-5-oxopentanoate + tRNA(Glu) + NADP(+) = L-glutamyl-tRNA(Glu) + NADPH + H(+). It participates in porphyrin-containing compound metabolism; protoporphyrin-IX biosynthesis; 5-aminolevulinate from L-glutamyl-tRNA(Glu): step 1/2. Catalyzes the NADPH-dependent reduction of glutamyl-tRNA(Glu) to glutamate 1-semialdehyde (GSA). The polypeptide is Glutamyl-tRNA reductase (Shewanella halifaxensis (strain HAW-EB4)).